A 156-amino-acid polypeptide reads, in one-letter code: 6,7-dimethyl-8-ribityllumazine synthase (156 aa).

5-amino-6-(D-ribitylamino)uracil is bound by residues Phe24, 56 to 58, and 80 to 82; these read SFE and AVV. 85-86 lines the (2S)-2-hydroxy-3-oxobutyl phosphate pocket; sequence ET. His88 (proton donor) is an active-site residue. A 5-amino-6-(D-ribitylamino)uracil-binding site is contributed by Phe113. Arg127 is a binding site for (2S)-2-hydroxy-3-oxobutyl phosphate.

Belongs to the DMRL synthase family.

The enzyme catalyses (2S)-2-hydroxy-3-oxobutyl phosphate + 5-amino-6-(D-ribitylamino)uracil = 6,7-dimethyl-8-(1-D-ribityl)lumazine + phosphate + 2 H2O + H(+). It functions in the pathway cofactor biosynthesis; riboflavin biosynthesis; riboflavin from 2-hydroxy-3-oxobutyl phosphate and 5-amino-6-(D-ribitylamino)uracil: step 1/2. In terms of biological role, catalyzes the formation of 6,7-dimethyl-8-ribityllumazine by condensation of 5-amino-6-(D-ribitylamino)uracil with 3,4-dihydroxy-2-butanone 4-phosphate. This is the penultimate step in the biosynthesis of riboflavin. The protein is 6,7-dimethyl-8-ribityllumazine synthase of Thermococcus kodakarensis (strain ATCC BAA-918 / JCM 12380 / KOD1) (Pyrococcus kodakaraensis (strain KOD1)).